Reading from the N-terminus, the 268-residue chain is Shikimate dehydrogenase (NADP(+)) (268 aa).

Residues 13–15 and T60 each bind shikimate; that span reads SLS. K64 acts as the Proton acceptor in catalysis. D76 is an NADP(+) binding site. Shikimate contacts are provided by N85 and D100. Residues 124-128, 148-153, and I209 each bind NADP(+); these read GAGGA and NRTMSR. Shikimate is bound at residue Y211. G232 is an NADP(+) binding site.

Belongs to the shikimate dehydrogenase family. As to quaternary structure, homodimer.

The enzyme catalyses shikimate + NADP(+) = 3-dehydroshikimate + NADPH + H(+). It participates in metabolic intermediate biosynthesis; chorismate biosynthesis; chorismate from D-erythrose 4-phosphate and phosphoenolpyruvate: step 4/7. In terms of biological role, involved in the biosynthesis of the chorismate, which leads to the biosynthesis of aromatic amino acids. Catalyzes the reversible NADPH linked reduction of 3-dehydroshikimate (DHSA) to yield shikimate (SA). In Staphylococcus haemolyticus (strain JCSC1435), this protein is Shikimate dehydrogenase (NADP(+)).